Reading from the N-terminus, the 237-residue chain is Uracil-DNA glycosylase (237 aa).

The active-site Proton acceptor is the Asp-77.

It belongs to the uracil-DNA glycosylase (UDG) superfamily. UNG family.

The protein resides in the cytoplasm. It catalyses the reaction Hydrolyzes single-stranded DNA or mismatched double-stranded DNA and polynucleotides, releasing free uracil.. Its function is as follows. Excises uracil residues from the DNA which can arise as a result of misincorporation of dUMP residues by DNA polymerase or due to deamination of cytosine. The chain is Uracil-DNA glycosylase from Acinetobacter baumannii (strain AB307-0294).